A 106-amino-acid polypeptide reads, in one-letter code: UPF0145 protein NE1032 (106 aa).

Belongs to the UPF0145 family.

This chain is UPF0145 protein NE1032, found in Nitrosomonas europaea (strain ATCC 19718 / CIP 103999 / KCTC 2705 / NBRC 14298).